Consider the following 321-residue polypeptide: Hydropyrene synthase (321 aa).

Asp-82, Asn-225, Ser-229, and Glu-233 together coordinate Mg(2+). Positions 82-87 match the DDxx(x)D/E motif motif; the sequence is DDRAID. The NDxxSxxxD/E motif signature appears at 225-233; sequence NDLHSFARE.

It belongs to the terpene synthase family. Mg(2+) serves as cofactor.

The enzyme catalyses (2E,6E,10E)-geranylgeranyl diphosphate = hydropyrene + diphosphate. The catalysed reaction is (2E,6E,10E)-geranylgeranyl diphosphate + H2O = hydropyrenol + diphosphate. It carries out the reaction (2E,6E,10E)-geranylgeranyl diphosphate = isoelisabethatriene + diphosphate. It functions in the pathway secondary metabolite biosynthesis; terpenoid biosynthesis. Terpene synthase that catalyzes the conversion of geranylgeranyl diphosphate (GGPP) into a mixture of diterpenes, including hydropyrene (HP), hydropyrenol (HPol), isoelisabethatriene and traces of isoelisabethatriene B. Hydropyrene is the main product. Some other diterpenoids are also produced in very low quantities. In Streptomyces clavuligerus, this protein is Hydropyrene synthase.